The chain runs to 332 residues: Holliday junction branch migration complex subunit RuvB (332 aa).

Residues 1–181 (MSRILDNEQM…FGITGHMEYY (181 aa)) form a large ATPase domain (RuvB-L) region. Residues Leu-20, Arg-21, Gly-62, Lys-65, Thr-66, Thr-67, 128–130 (EDF), Arg-171, Tyr-181, and Arg-218 contribute to the ATP site. Residue Thr-66 coordinates Mg(2+). The tract at residues 182–252 (EEADLTEIVE…ITDQALSMLD (71 aa)) is small ATPAse domain (RuvB-S). A head domain (RuvB-H) region spans residues 255–332 (HEGLDYVDQK…EHLGYEYMEK (78 aa)). Residues Arg-291, Arg-310, Arg-312, and Arg-315 each coordinate DNA.

The protein belongs to the RuvB family. In terms of assembly, homohexamer. Forms an RuvA(8)-RuvB(12)-Holliday junction (HJ) complex. HJ DNA is sandwiched between 2 RuvA tetramers; dsDNA enters through RuvA and exits via RuvB. An RuvB hexamer assembles on each DNA strand where it exits the tetramer. Each RuvB hexamer is contacted by two RuvA subunits (via domain III) on 2 adjacent RuvB subunits; this complex drives branch migration. In the full resolvosome a probable DNA-RuvA(4)-RuvB(12)-RuvC(2) complex forms which resolves the HJ.

It is found in the cytoplasm. The catalysed reaction is ATP + H2O = ADP + phosphate + H(+). Its function is as follows. The RuvA-RuvB-RuvC complex processes Holliday junction (HJ) DNA during genetic recombination and DNA repair, while the RuvA-RuvB complex plays an important role in the rescue of blocked DNA replication forks via replication fork reversal (RFR). RuvA specifically binds to HJ cruciform DNA, conferring on it an open structure. The RuvB hexamer acts as an ATP-dependent pump, pulling dsDNA into and through the RuvAB complex. RuvB forms 2 homohexamers on either side of HJ DNA bound by 1 or 2 RuvA tetramers; 4 subunits per hexamer contact DNA at a time. Coordinated motions by a converter formed by DNA-disengaged RuvB subunits stimulates ATP hydrolysis and nucleotide exchange. Immobilization of the converter enables RuvB to convert the ATP-contained energy into a lever motion, pulling 2 nucleotides of DNA out of the RuvA tetramer per ATP hydrolyzed, thus driving DNA branch migration. The RuvB motors rotate together with the DNA substrate, which together with the progressing nucleotide cycle form the mechanistic basis for DNA recombination by continuous HJ branch migration. Branch migration allows RuvC to scan DNA until it finds its consensus sequence, where it cleaves and resolves cruciform DNA. In Streptococcus gordonii (strain Challis / ATCC 35105 / BCRC 15272 / CH1 / DL1 / V288), this protein is Holliday junction branch migration complex subunit RuvB.